A 280-amino-acid chain; its full sequence is Large ribosomal subunit protein uL2 (280 aa).

2 disordered regions span residues Leu33–Gly55 and Asp199–Gln266. Residues Gly209 to Ser219 are compositionally biased toward basic residues.

It belongs to the universal ribosomal protein uL2 family. In terms of assembly, part of the 50S ribosomal subunit. Forms a bridge to the 30S subunit in the 70S ribosome.

Functionally, one of the primary rRNA binding proteins. Required for association of the 30S and 50S subunits to form the 70S ribosome, for tRNA binding and peptide bond formation. It has been suggested to have peptidyltransferase activity; this is somewhat controversial. Makes several contacts with the 16S rRNA in the 70S ribosome. This Ruegeria sp. (strain TM1040) (Silicibacter sp.) protein is Large ribosomal subunit protein uL2.